The sequence spans 354 residues: MRFDLEPPSSVAAAHRIGVLLINLGTPDAPTPRAVRRYLAEFLSDPRVVEIPQAVWQVLLRTLILPLRGRASAKKYAAVWMPEGSPLRVYTERQTDSVRHLLTSNGYHVMVDYAMRYGSPNISHALTQFKRAGVERVLLMPMYPQYSASTTATTFDAAFDALARMRNQPEVRTVRHYADHPAYIHALAEQVRQYWAQHGRPDFAAGDKLVLSFHGVPKRTLDLGDPYHDQCQQTGALLMAALGLSTTECRVTFQSRFGKAEWLQPYTAPTLREFGEAGVRRADVFCPGFTADCLETIEEIGMEVRDEFLAGGGTTFHRIPCLNGASAWIGALSEIVAENLQGWPVKAAQPEPVN.

Fe cation contacts are provided by His-214 and Glu-295.

It belongs to the ferrochelatase family.

It localises to the cytoplasm. It catalyses the reaction heme b + 2 H(+) = protoporphyrin IX + Fe(2+). It functions in the pathway porphyrin-containing compound metabolism; protoheme biosynthesis; protoheme from protoporphyrin-IX: step 1/1. Catalyzes the ferrous insertion into protoporphyrin IX. The protein is Ferrochelatase of Burkholderia cenocepacia (strain HI2424).